Consider the following 292-residue polypeptide: Probable endonuclease 4 (292 aa).

The Zn(2+) site is built by His-71, His-111, Glu-148, Asp-182, His-185, His-217, Asp-230, His-232, and Glu-262.

It belongs to the AP endonuclease 2 family. It depends on Zn(2+) as a cofactor.

It catalyses the reaction Endonucleolytic cleavage to 5'-phosphooligonucleotide end-products.. Its function is as follows. Endonuclease IV plays a role in DNA repair. It cleaves phosphodiester bonds at apurinic or apyrimidinic (AP) sites, generating a 3'-hydroxyl group and a 5'-terminal sugar phosphate. This is Probable endonuclease 4 from Aster yellows witches'-broom phytoplasma (strain AYWB).